Reading from the N-terminus, the 161-residue chain is Protein yippee-like B0546.4 (161 aa).

One can recognise a Yippee domain in the interval S14 to A111. Residues C18, C21, C74, and C77 each contribute to the Zn(2+) site. Residues P117–C161 are disordered. A compositionally biased stretch (low complexity) spans V151 to C161.

The protein belongs to the yippee family.

The protein is Protein yippee-like B0546.4 of Caenorhabditis elegans.